A 963-amino-acid polypeptide reads, in one-letter code: Importin-13 (963 aa).

20 HEAT repeats span residues 24–54 (ENVEKALHQLYYDPNIENKNLAQKWLMQAQA), 56–88 (PQAWHFSWQLLQPDKVPEIQYFGASALHIKISR), 95–135 (TDQY…LSMM), 142–179 (AVADMVRLFQAEDSPVDSQGRCLALLELLTVLPEEFQT), 194–231 (LAVECGAVFPLLEQLLQQPSSPSCVRQKVLKCFSSWVQ), 236–268 (LQDCEALIQAAFAALQDSELFDSSVEAIVNAIS), 276–325 (VNTL…ALLD), 330–372 (WQSF…DDIL), 375–438 (EAEK…YEML), 440–476 (AELLSNLYDKLGRLLTSSEEPYSWQHTEALLYGFQSI), 487–522 (VVPGLIGLIPRISISNVQLADTVMFTIGALSEWLAD), 524–558 (PVMINSVLPLVLHALGNPELSISSVSTLKKICREC), 562–600 (LPPYAANIVAVSQDVLMKQIHKTSQCMWLMQALGFLLSA), 603–648 (VEEI…SNLF), 676–716 (PVVV…VKTL), 720–754 (FAPMVPQLCEMLGRMYSTIPQASALDLTRQLVHIF), 761–803 (FPPI…ALKR), 815–845 (VKAVFQCAVLALKFPEAPTVKASCGFFTELL), 860–893 (EDGRMLLIAVLEAIGGQASRSLMDCFADILFALN), and 897–931 (FSLLSVWIKEALQAPGFPSARLSPEQKDTFSQQIL). Positions 45–111 (AQKWLMQAQA…KAQLFTQITR (67 aa)) constitute an Importin N-terminal domain.

Belongs to the importin beta family. As to quaternary structure, interacts with UBC9, RAN, RBM8A, eIF-1A and PAX6.

Its subcellular location is the cytoplasm. It localises to the nucleus. Its function is as follows. Functions in nuclear protein import as nuclear transport receptor. Serves as receptor for nuclear localization signals (NLS) in cargo substrates. Is thought to mediate docking of the importin/substrate complex to the nuclear pore complex (NPC) through binding to nucleoporin and the complex is subsequently translocated through the pore by an energy requiring, Ran-dependent mechanism. At the nucleoplasmic side of the NPC, Ran binds to the importin, the importin/substrate complex dissociates and importin is re-exported from the nucleus to the cytoplasm where GTP hydrolysis releases Ran. The directionality of nuclear import is thought to be conferred by an asymmetric distribution of the GTP- and GDP-bound forms of Ran between the cytoplasm and nucleus. Mediates the nuclear import of UBC9, the RBM8A/MAGOH complex, PAX6 and probably other members of the paired homeobox family. Also mediates nuclear export of eIF-1A, and the cytoplasmic release of eIF-1A is triggered by the loading of import substrates onto IPO13. The polypeptide is Importin-13 (IPO13) (Bos taurus (Bovine)).